A 795-amino-acid chain; its full sequence is Protocadherin beta-4 (795 aa).

The signal sequence occupies residues 1–27 (MKKLGRIHPNRQVLAFILMVFLSQVRL). Residues 28–689 (EPIRYSVLEE…SQADSLTVYL (662 aa)) are Extracellular-facing. Cadherin domains are found at residues 34–132 (VLEE…SPVF), 137–241 (VLLK…APEF), 246–346 (YGVQ…PPEL), 351–450 (LTSS…APAF), and 455–560 (YTLF…SPFV). Residue Asn183 is glycosylated (N-linked (GlcNAc...) asparagine). Residue Asn417 is glycosylated (N-linked (GlcNAc...) asparagine). Asn566 carries N-linked (GlcNAc...) asparagine glycosylation. In terms of domain architecture, Cadherin 6 spans 567-670 (GSAPCTELVP…LVDGFSQPYL (104 aa)). Residues 690 to 710 (VVALASVSSLFLFSVLLFVAV) form a helical membrane-spanning segment. The Cytoplasmic segment spans residues 711–795 (RLCRRSRAAS…PKFRNSLVFS (85 aa)).

Its subcellular location is the cell membrane. In terms of biological role, potential calcium-dependent cell-adhesion protein. May be involved in the establishment and maintenance of specific neuronal connections in the brain. This chain is Protocadherin beta-4 (PCDHB4), found in Pan troglodytes (Chimpanzee).